A 480-amino-acid chain; its full sequence is Glutamate--tRNA ligase (480 aa).

Residues 21 to 31 carry the 'HIGH' region motif; that stretch reads PSPTGYLHVGG. Zn(2+) contacts are provided by Cys110, Cys112, Cys137, and His139. The short motif at 248–252 is the 'KMSKS' region element; it reads KLSKR. Lys251 contributes to the ATP binding site.

It belongs to the class-I aminoacyl-tRNA synthetase family. Glutamate--tRNA ligase type 1 subfamily. In terms of assembly, monomer. Requires Zn(2+) as cofactor.

It is found in the cytoplasm. It catalyses the reaction tRNA(Glu) + L-glutamate + ATP = L-glutamyl-tRNA(Glu) + AMP + diphosphate. In terms of biological role, catalyzes the attachment of glutamate to tRNA(Glu) in a two-step reaction: glutamate is first activated by ATP to form Glu-AMP and then transferred to the acceptor end of tRNA(Glu). This chain is Glutamate--tRNA ligase, found in Histophilus somni (strain 129Pt) (Haemophilus somnus).